Reading from the N-terminus, the 249-residue chain is Proteasome subunit alpha type-7 (249 aa).

This sequence belongs to the peptidase T1A family. In terms of assembly, the 26S proteasome consists of a 20S proteasome core and two 19S regulatory subunits. The 20S proteasome core is a barrel-shaped complex made of 28 subunits that are arranged in four stacked rings. The two outer rings are each formed by seven alpha subunits, and the two inner rings are formed by seven beta subunits. The proteolytic activity is exerted by three beta-subunits PSMB5, PSMB6 and PSMB7. PSMA7 interacts directly with the PSMG1-PSMG2 heterodimer which promotes 20S proteasome assembly. Interacts with HIF1A. Interacts with RAB7A. Interacts with PRKN. Interacts with ABL1 and ABL2. Interacts with EMAP2. Interacts with MAVS.

The protein localises to the cytoplasm. The protein resides in the nucleus. In terms of biological role, component of the 20S core proteasome complex involved in the proteolytic degradation of most intracellular proteins. This complex plays numerous essential roles within the cell by associating with different regulatory particles. Associated with two 19S regulatory particles, forms the 26S proteasome and thus participates in the ATP-dependent degradation of ubiquitinated proteins. The 26S proteasome plays a key role in the maintenance of protein homeostasis by removing misfolded or damaged proteins that could impair cellular functions, and by removing proteins whose functions are no longer required. Associated with the PA200 or PA28, the 20S proteasome mediates ubiquitin-independent protein degradation. This type of proteolysis is required in several pathways including spermatogenesis (20S-PA200 complex) or generation of a subset of MHC class I-presented antigenic peptides (20S-PA28 complex). Inhibits the transactivation function of HIF-1A under both normoxic and hypoxia-mimicking conditions. The interaction with EMAP2 increases the proteasome-mediated HIF-1A degradation under the hypoxic conditions. Plays a role in hepatitis C virus internal ribosome entry site-mediated translation. Mediates nuclear translocation of the androgen receptor (AR) and thereby enhances androgen-mediated transactivation. Promotes MAVS degradation and thereby negatively regulates MAVS-mediated innate immune response. The chain is Proteasome subunit alpha type-7 (PSMA7) from Gallus gallus (Chicken).